Consider the following 494-residue polypeptide: Smoothelin-like protein 1 (494 aa).

Composition is skewed to basic and acidic residues over residues 1–10 (MEQKEGKLSE), 74–104 (DEVKVESQREAGGKEDAEAELKKEDGEKEET), 112–166 (TGRK…KATV), and 179–232 (TGQR…KEEA). Residues 1–348 (MEQKEGKLSE…ARPRGPRAQN (348 aa)) form a disordered region. The stretch at 123–145 (KEAEEKESTLASEKQKAEEKEAK) forms a coiled coil. Positions 233–255 (DAKEEAEDAEEAEPGSPSEEQEQ) are enriched in acidic residues. Composition is skewed to low complexity over residues 269-279 (PSSPEEWPESP) and 302-314 (SPSASESSPSDVP). Residues 324 to 335 (GEKKEKAPERRV) are compositionally biased toward basic and acidic residues. The residue at position 336 (Ser-336) is a Phosphoserine. Residues 378 to 484 (GGVKNMLLEW…YIQELYRSLV (107 aa)) enclose the Calponin-homology (CH) domain. Residues 476-494 (IQELYRSLVQKGLVKTKKK) are calmodulin-binding.

This sequence belongs to the smoothelin family. As to quaternary structure, interacts with PPP1R12A. Maximal phosphorylation of Ser-336 correlates with maximal relaxation of aorta in response to acetylcholine. In terms of tissue distribution, expressed in striated muscles, specifically in type 2a fibers (at protein level).

Its subcellular location is the cytoplasm. It is found in the myofibril. It localises to the sarcomere. The protein localises to the i band. The protein resides in the m line. Its subcellular location is the nucleus. In terms of biological role, plays a role in the regulation of contractile properties of both striated and smooth muscles. When unphosphorylated, may inhibit myosin dephosphorylation. Phosphorylation at Ser-299 reduces this inhibitory activity. This Homo sapiens (Human) protein is Smoothelin-like protein 1 (SMTNL1).